The chain runs to 910 residues: MLSKLLTKVIGSRNDRTLRRMRKIVDEINKLEPQFDSLQDEDLKAKTVEFRERLDQGESLDLLLPEAFATVREASKRVFGMRHFDVQLLGGMVLNNCQIAEMRTGEGKTLTATLPAYLNALTGKGVHIVTVNDYLAARDAETNRALFEFLGMTVGINVPNMPPQAKKEAYSADVLYGTNNEFGFDYLRDNMAFRPEDRVQRERFFAVVDEVDSILIDEARTPLIISGPAEDSSDLYTRINLLIPQLVKQDQEDSEDFRGDGHYTVDEKSKQTHLTENGQEFVEELLTQQGMMAEDDTLYSPSNISLLHHITAALRAHVLFERDVDYIVKDDEVIIVDEHTGRTMPGRRWSEGLHQAVEAKEGVKIQNENQTLASITFQNYFRLYSKLSGMTGTADTEAFEFQSIYGLETVVMPTNKPMVRDDMGDLVYMTEAEKFAAICEDIKERFAKGQPVLVGTVSIEKSELLSNALKKEGIKHEVLNAKFHEKEAYIIANAGQSGAVTIATNMAGRGTDIVLGGSWQEEISNLQDPTDAQIAQIKVDWKVRHETVLAAGGLHITGTERHESRRIDNQLRGRSGRQGDAGSSRFYLSMEDGLMRIFASDRVSNMMKKLGMEEGEAIEHPWVTKAIENAQRKVEGRNFDIRKQLLEFDDVANDQRQVVYELRDELMNADDISGMITQNRDDVILAVVDTYIPQQSLEEMWDIKGLEERLKADFDLELPIQEWLDTEEKLYEEALRERIVAKAIEVYQQKEEVVGAEVLRNFEKTVMLQNLDTLWKEHLAAMDHLRQGIHLRGYAQKNPKQEYKRESFELFEEMLDSLKSDVVSILSKVRVQQQEEVDRMEEERRQQAEELARRQQYQHQNAASQIADESDAGQPAESGTFEREARKVGRNEPCPCGSGKKYKQCHGKIN.

Residues glutamine 87, glycine 105 to threonine 109, and aspartate 512 each bind ATP. Composition is skewed to basic and acidic residues over residues arginine 561–leucine 571, glutamate 841–arginine 853, and threonine 880–arginine 890. Disordered regions lie at residues arginine 561–serine 584 and glutamate 835–asparagine 910. 4 residues coordinate Zn(2+): cysteine 894, cysteine 896, cysteine 905, and histidine 906. The segment covering lysine 900–asparagine 910 has biased composition (basic residues).

This sequence belongs to the SecA family. In terms of assembly, monomer and homodimer. Part of the essential Sec protein translocation apparatus which comprises SecA, SecYEG and auxiliary proteins SecDF-YajC and YidC. Zn(2+) is required as a cofactor.

Its subcellular location is the cell inner membrane. It is found in the cytoplasm. The enzyme catalyses ATP + H2O + cellular proteinSide 1 = ADP + phosphate + cellular proteinSide 2.. Functionally, part of the Sec protein translocase complex. Interacts with the SecYEG preprotein conducting channel. Has a central role in coupling the hydrolysis of ATP to the transfer of proteins into and across the cell membrane, serving both as a receptor for the preprotein-SecB complex and as an ATP-driven molecular motor driving the stepwise translocation of polypeptide chains across the membrane. The sequence is that of Protein translocase subunit SecA from Photobacterium profundum (strain SS9).